Reading from the N-terminus, the 461-residue chain is Coronin-1A (461 aa).

The residue at position 2 (Ser-2) is an N-acetylserine. Ser-2 is subject to Phosphoserine; by PKC. WD repeat units lie at residues 13 to 63 (HVFG…LVLP), 73 to 110 (NAPT…MVWE), 123 to 160 (PVVT…MVWD), 164 to 204 (GAAM…RIIE), 207 to 251 (KGTV…ALWD), 258 to 296 (PLSL…RYFE), and 302 to 349 (PFLH…EPIA). Residues 403–418 (ELRVNRGLDTGRRRAA) show a composition bias toward basic and acidic residues. The interval 403 to 432 (ELRVNRGLDTGRRRAAPEASGTPSSDAVSR) is disordered. Residue Thr-412 is modified to Phosphothreonine; by PKC. Residue Ser-422 is modified to Phosphoserine. A coiled-coil region spans residues 424 to 460 (TPSSDAVSRLEEEMRKLQATVQELQKRLDRLEETVQA). Lys-449 is modified (N6-acetyllysine).

The protein belongs to the WD repeat coronin family. As to quaternary structure, binds actin. Phosphorylation at Thr-412 by PKC strongly down-regulates the association with actin. In terms of processing, polyubiquitinated by RNF128 with 'Lys-48'-linked chains, leading to proteasomal degradation. As to expression, expressed in brain, thymus, spleen, bone marrow and lymph node. Low in lung and gut.

It is found in the cytoplasm. It localises to the cytoskeleton. The protein localises to the cell cortex. The protein resides in the cytoplasmic vesicle. Its subcellular location is the phagosome membrane. May be a crucial component of the cytoskeleton of highly motile cells, functioning both in the invagination of large pieces of plasma membrane, as well as in forming protrusions of the plasma membrane involved in cell locomotion. In mycobacteria-infected cells, its retention on the phagosomal membrane prevents fusion between phagosomes and lysosomes. The chain is Coronin-1A (CORO1A) from Homo sapiens (Human).